A 109-amino-acid chain; its full sequence is Large ribosomal subunit protein uL24 (109 aa).

This sequence belongs to the universal ribosomal protein uL24 family. In terms of assembly, part of the 50S ribosomal subunit.

In terms of biological role, one of two assembly initiator proteins, it binds directly to the 5'-end of the 23S rRNA, where it nucleates assembly of the 50S subunit. One of the proteins that surrounds the polypeptide exit tunnel on the outside of the subunit. This Ehrlichia chaffeensis (strain ATCC CRL-10679 / Arkansas) protein is Large ribosomal subunit protein uL24.